The chain runs to 87 residues: U3-theraphotoxin-Hhn1a 6 (87 aa).

Residues methionine 1 to alanine 24 form the signal peptide. The propeptide occupies serine 25–arginine 52. 3 disulfide bridges follow: cysteine 54–cysteine 67, cysteine 61–cysteine 72, and cysteine 66–cysteine 79.

It belongs to the neurotoxin 10 (Hwtx-1) family. 51 (Hntx-8) subfamily. Hntx-8 sub-subfamily. Expressed by the venom gland.

The protein resides in the secreted. In terms of biological role, ion channel inhibitor. This chain is U3-theraphotoxin-Hhn1a 6, found in Cyriopagopus hainanus (Chinese bird spider).